A 284-amino-acid chain; its full sequence is RNase adapter protein RapZ (284 aa).

8–15 provides a ligand contact to ATP; the sequence is GRSGSGKS. 56-59 lines the GTP pocket; sequence DVRN. Positions 266-284 are RNA-binding; sequence RSRGKNVQSRHRTLEKRKS.

Belongs to the RapZ-like family. RapZ subfamily. Homotrimer.

Its function is as follows. Modulates the synthesis of GlmS, by affecting the processing and stability of the regulatory small RNA GlmZ. When glucosamine-6-phosphate (GlcN6P) concentrations are high in the cell, RapZ binds GlmZ and targets it to cleavage by RNase E. Consequently, GlmZ is inactivated and unable to activate GlmS synthesis. Under low GlcN6P concentrations, RapZ is sequestered and inactivated by an other regulatory small RNA, GlmY, preventing GlmZ degradation and leading to synthesis of GlmS. This chain is RNase adapter protein RapZ, found in Klebsiella oxytoca.